We begin with the raw amino-acid sequence, 95 residues long: Integration host factor subunit beta (95 aa).

Belongs to the bacterial histone-like protein family. Heterodimer of an alpha and a beta chain.

Its function is as follows. This protein is one of the two subunits of integration host factor, a specific DNA-binding protein that functions in genetic recombination as well as in transcriptional and translational control. This is Integration host factor subunit beta from Paracoccus denitrificans (strain Pd 1222).